The following is a 115-amino-acid chain: Yop proteins translocation protein M (115 aa).

The interval 19 to 38 (HGGQAGRLTETNPLTENSHQ) is disordered. Over residues 27 to 38 (TETNPLTENSHQ) the composition is skewed to polar residues.

Belongs to an operon involved in the translocation of Yop proteins across the bacterial membranes or in the specific control of this function. This is Yop proteins translocation protein M (yscM) from Yersinia pestis.